We begin with the raw amino-acid sequence, 252 residues long: Ubiquinone/menaquinone biosynthesis C-methyltransferase UbiE (252 aa).

S-adenosyl-L-methionine is bound by residues Thr75, Asp96, and 123–124 (NA).

It belongs to the class I-like SAM-binding methyltransferase superfamily. MenG/UbiE family.

The enzyme catalyses a 2-demethylmenaquinol + S-adenosyl-L-methionine = a menaquinol + S-adenosyl-L-homocysteine + H(+). The catalysed reaction is a 2-methoxy-6-(all-trans-polyprenyl)benzene-1,4-diol + S-adenosyl-L-methionine = a 5-methoxy-2-methyl-3-(all-trans-polyprenyl)benzene-1,4-diol + S-adenosyl-L-homocysteine + H(+). It participates in quinol/quinone metabolism; menaquinone biosynthesis; menaquinol from 1,4-dihydroxy-2-naphthoate: step 2/2. Its pathway is cofactor biosynthesis; ubiquinone biosynthesis. Functionally, methyltransferase required for the conversion of demethylmenaquinol (DMKH2) to menaquinol (MKH2) and the conversion of 2-polyprenyl-6-methoxy-1,4-benzoquinol (DDMQH2) to 2-polyprenyl-3-methyl-6-methoxy-1,4-benzoquinol (DMQH2). The sequence is that of Ubiquinone/menaquinone biosynthesis C-methyltransferase UbiE from Methylobacterium nodulans (strain LMG 21967 / CNCM I-2342 / ORS 2060).